Consider the following 388-residue polypeptide: Galactokinase (388 aa).

Substrate is bound at residue 33 to 36; sequence EHTD. ATP contacts are provided by residues serine 67 and 124–130; that span reads GSGLSSS. Residues serine 130 and glutamate 162 each coordinate Mg(2+). Aspartate 174 (proton acceptor) is an active-site residue. Residue tyrosine 224 participates in substrate binding.

The protein belongs to the GHMP kinase family. GalK subfamily.

The protein resides in the cytoplasm. It carries out the reaction alpha-D-galactose + ATP = alpha-D-galactose 1-phosphate + ADP + H(+). It participates in carbohydrate metabolism; galactose metabolism. Catalyzes the transfer of the gamma-phosphate of ATP to D-galactose to form alpha-D-galactose-1-phosphate (Gal-1-P). This chain is Galactokinase, found in Streptococcus thermophilus.